The following is a 130-amino-acid chain: Ribonuclease P protein component (130 aa).

This sequence belongs to the RnpA family. As to quaternary structure, consists of a catalytic RNA component (M1 or rnpB) and a protein subunit.

It carries out the reaction Endonucleolytic cleavage of RNA, removing 5'-extranucleotides from tRNA precursor.. Its function is as follows. RNaseP catalyzes the removal of the 5'-leader sequence from pre-tRNA to produce the mature 5'-terminus. It can also cleave other RNA substrates such as 4.5S RNA. The protein component plays an auxiliary but essential role in vivo by binding to the 5'-leader sequence and broadening the substrate specificity of the ribozyme. The sequence is that of Ribonuclease P protein component from Azotobacter vinelandii (strain DJ / ATCC BAA-1303).